Here is a 363-residue protein sequence, read N- to C-terminus: MAIQTDSFAAAPAPSSGSTRRLISAAPTSPNEEAMERALRPKLLQEYVGQAKAREQLEIFIGAARKRSEALDHVLLFGPPGLGKTTLSHIIAAELGVNLRQTSGPVLEKPKDLAAILTNLEANDVLFIDEIHRLSPVVEEILYPALEDYQIDIMIGEGPAARSIKLDLQPFTLVGATTRAGMLTNPLRDRFGIVARLEFYTPEELVRIVTRSAGLLNVPIDAEGALELACRSRGTPRIANRLLRRVRDYAEVKSDGRIVKRIAELALTMLDVDPRGFDVMDRKLLEAVIHRFDGGPVGLDNVAAAIGEDAGTIEDVIEPYLIQQGFLQRTPRGRIATLAAYRHLGVTPPRGGAGPVGSDLFEG.

Positions 1 to 32 are disordered; the sequence is MAIQTDSFAAAPAPSSGSTRRLISAAPTSPNE. Residues 7-18 show a composition bias toward low complexity; it reads SFAAAPAPSSGS. Residues 13–200 form a large ATPase domain (RuvB-L) region; it reads APSSGSTRRL…FGIVARLEFY (188 aa). ATP contacts are provided by residues L39, R40, G81, K84, T85, T86, 147 to 149, R190, Y200, and R237; that span reads EDY. T85 contributes to the Mg(2+) binding site. The segment at 201–271 is small ATPAse domain (RuvB-S); that stretch reads TPEELVRIVT…IAELALTMLD (71 aa). Residues 274 to 363 are head domain (RuvB-H); sequence PRGFDVMDRK…GPVGSDLFEG (90 aa). R329 and R334 together coordinate DNA.

This sequence belongs to the RuvB family. As to quaternary structure, homohexamer. Forms an RuvA(8)-RuvB(12)-Holliday junction (HJ) complex. HJ DNA is sandwiched between 2 RuvA tetramers; dsDNA enters through RuvA and exits via RuvB. An RuvB hexamer assembles on each DNA strand where it exits the tetramer. Each RuvB hexamer is contacted by two RuvA subunits (via domain III) on 2 adjacent RuvB subunits; this complex drives branch migration. In the full resolvosome a probable DNA-RuvA(4)-RuvB(12)-RuvC(2) complex forms which resolves the HJ.

The protein localises to the cytoplasm. The enzyme catalyses ATP + H2O = ADP + phosphate + H(+). In terms of biological role, the RuvA-RuvB-RuvC complex processes Holliday junction (HJ) DNA during genetic recombination and DNA repair, while the RuvA-RuvB complex plays an important role in the rescue of blocked DNA replication forks via replication fork reversal (RFR). RuvA specifically binds to HJ cruciform DNA, conferring on it an open structure. The RuvB hexamer acts as an ATP-dependent pump, pulling dsDNA into and through the RuvAB complex. RuvB forms 2 homohexamers on either side of HJ DNA bound by 1 or 2 RuvA tetramers; 4 subunits per hexamer contact DNA at a time. Coordinated motions by a converter formed by DNA-disengaged RuvB subunits stimulates ATP hydrolysis and nucleotide exchange. Immobilization of the converter enables RuvB to convert the ATP-contained energy into a lever motion, pulling 2 nucleotides of DNA out of the RuvA tetramer per ATP hydrolyzed, thus driving DNA branch migration. The RuvB motors rotate together with the DNA substrate, which together with the progressing nucleotide cycle form the mechanistic basis for DNA recombination by continuous HJ branch migration. Branch migration allows RuvC to scan DNA until it finds its consensus sequence, where it cleaves and resolves cruciform DNA. In Leptothrix cholodnii (strain ATCC 51168 / LMG 8142 / SP-6) (Leptothrix discophora (strain SP-6)), this protein is Holliday junction branch migration complex subunit RuvB.